Here is a 132-residue protein sequence, read N- to C-terminus: Small ribosomal subunit protein eS24 (132 aa).

Residues 90 to 100 show a composition bias toward basic and acidic residues; sequence RLAKHGLYEKK. Positions 90–132 are disordered; that stretch reads RLAKHGLYEKKKTSRKQRKERKNRMKKVRGTAKANVGAGKKKD. The segment covering 101 to 119 has biased composition (basic residues); sequence KTSRKQRKERKNRMKKVRG.

The protein belongs to the eukaryotic ribosomal protein eS24 family. In terms of assembly, component of the small ribosomal subunit. Part of the small subunit (SSU) processome, composed of more than 70 proteins and the RNA chaperone small nucleolar RNA (snoRNA) U3.

The protein localises to the cytoplasm. It localises to the nucleus. It is found in the nucleolus. Component of the small ribosomal subunit. The ribosome is a large ribonucleoprotein complex responsible for the synthesis of proteins in the cell. Required for processing of pre-rRNA and maturation of 40S ribosomal subunits. Part of the small subunit (SSU) processome, first precursor of the small eukaryotic ribosomal subunit. During the assembly of the SSU processome in the nucleolus, many ribosome biogenesis factors, an RNA chaperone and ribosomal proteins associate with the nascent pre-rRNA and work in concert to generate RNA folding, modifications, rearrangements and cleavage as well as targeted degradation of pre-ribosomal RNA by the RNA exosome. The polypeptide is Small ribosomal subunit protein eS24 (rps24) (Xenopus laevis (African clawed frog)).